We begin with the raw amino-acid sequence, 197 residues long: Probable GTP-binding protein EngB (197 aa).

The EngB-type G domain maps to 22–195 (NLPEIAFVGR…VDYLFDDLVE (174 aa)). GTP-binding positions include 30 to 37 (GRSNVGKS), 57 to 61 (GKTRL), 75 to 78 (DLPG), 142 to 145 (TKSD), and 174 to 176 (FSS). Mg(2+)-binding residues include Ser37 and Thr59.

This sequence belongs to the TRAFAC class TrmE-Era-EngA-EngB-Septin-like GTPase superfamily. EngB GTPase family. Mg(2+) serves as cofactor.

Necessary for normal cell division and for the maintenance of normal septation. This is Probable GTP-binding protein EngB from Clostridium perfringens (strain 13 / Type A).